The chain runs to 247 residues: Putative methyltransferase YqeM (247 aa).

It belongs to the methyltransferase superfamily.

Functionally, may be a S-adenosyl-L-methionine (SAM)-dependent methyltransferase. In Bacillus subtilis (strain 168), this protein is Putative methyltransferase YqeM (yqeM).